A 325-amino-acid polypeptide reads, in one-letter code: Probable isoaspartyl peptidase/L-asparaginase 2 (325 aa).

Threonine 195 acts as the Nucleophile in catalysis. Substrate-binding positions include 223–226 (RIGD) and 245–248 (TGEG).

The protein belongs to the Ntn-hydrolase family. In terms of assembly, heterotetramer of two alpha and two beta chains arranged as a dimer of alpha/beta heterodimers. In terms of processing, cleaved into an alpha and beta chain by autocatalysis; this activates the enzyme. The N-terminal residue of the beta subunit is responsible for the nucleophile hydrolase activity.

It catalyses the reaction Cleavage of a beta-linked Asp residue from the N-terminus of a polypeptide.. Functionally, acts in asparagine catabolism and also in the final steps of protein degradation via hydrolysis of a range of isoaspartyl dipeptides. This chain is Probable isoaspartyl peptidase/L-asparaginase 2, found in Arabidopsis thaliana (Mouse-ear cress).